The following is a 265-amino-acid chain: Transcription factor BHLH062 (265 aa).

The tract at residues methionine 1–valine 26 is disordered. The interval proline 35–arginine 48 is basic motif; degenerate. A bHLH domain is found at proline 35–leucine 85. Positions aspartate 49–leucine 85 are helix-loop-helix motif. Residues leucine 75–glutamate 130 are a coiled coil. Positions glutamate 200–serine 265 are disordered. The segment covering serine 210–threonine 220 has biased composition (basic and acidic residues). A compositionally biased stretch (polar residues) spans glutamine 245–threonine 256.

The protein belongs to the bHLH protein family. As to quaternary structure, interacts with TIFY11A/JAZ9.

It is found in the nucleus. In terms of biological role, transcription factor that plays a positive role in salt stress tolerance. Interacts with TIFY11A/JAZ9 and binds to the promoter of some potassium ion transporter genes to regulate potassium homeostasis during salt stress. The sequence is that of Transcription factor BHLH062 from Oryza sativa subsp. japonica (Rice).